The sequence spans 152 residues: Large-conductance mechanosensitive channel (152 aa).

3 consecutive transmembrane segments (helical) span residues 21–41 (IDLAVGVIIGAAFGKIVDSLV), 44–64 (VVMPLVNFILGGSVDFSNKFL), and 92–112 (GNFITIIINFVLLAFVIFWMV).

It belongs to the MscL family. Homopentamer.

The protein resides in the cell inner membrane. Its function is as follows. Channel that opens in response to stretch forces in the membrane lipid bilayer. May participate in the regulation of osmotic pressure changes within the cell. The chain is Large-conductance mechanosensitive channel from Bordetella pertussis (strain Tohama I / ATCC BAA-589 / NCTC 13251).